A 214-amino-acid polypeptide reads, in one-letter code: Pyridoxine/pyridoxamine 5'-phosphate oxidase (214 aa).

Substrate is bound by residues 9–12 and Lys67; that span reads RKNY. FMN-binding positions include 62-67, 77-78, Lys84, and Gln106; these read RMVLLK and YT. Substrate contacts are provided by Tyr124, Arg128, and Ser132. Residues 141-142 and Trp186 each bind FMN; that span reads QS. Substrate is bound at residue 192–194; the sequence is RLH. Arg196 is a binding site for FMN.

The protein belongs to the pyridoxamine 5'-phosphate oxidase family. In terms of assembly, homodimer. FMN is required as a cofactor.

The enzyme catalyses pyridoxamine 5'-phosphate + O2 + H2O = pyridoxal 5'-phosphate + H2O2 + NH4(+). It carries out the reaction pyridoxine 5'-phosphate + O2 = pyridoxal 5'-phosphate + H2O2. It participates in cofactor metabolism; pyridoxal 5'-phosphate salvage; pyridoxal 5'-phosphate from pyridoxamine 5'-phosphate: step 1/1. It functions in the pathway cofactor metabolism; pyridoxal 5'-phosphate salvage; pyridoxal 5'-phosphate from pyridoxine 5'-phosphate: step 1/1. Catalyzes the oxidation of either pyridoxine 5'-phosphate (PNP) or pyridoxamine 5'-phosphate (PMP) into pyridoxal 5'-phosphate (PLP). In Gloeothece citriformis (strain PCC 7424) (Cyanothece sp. (strain PCC 7424)), this protein is Pyridoxine/pyridoxamine 5'-phosphate oxidase.